Reading from the N-terminus, the 207-residue chain is Octanoyltransferase (207 aa).

Positions 27-203 (ADTEDELWVV…HLETQLTPKA (177 aa)) constitute a BPL/LPL catalytic domain. Residues 66–73 (RGGQITYH), 133–135 (SLG), and 146–148 (GLA) each bind substrate. Cysteine 164 (acyl-thioester intermediate) is an active-site residue.

Belongs to the LipB family.

It localises to the cytoplasm. It carries out the reaction octanoyl-[ACP] + L-lysyl-[protein] = N(6)-octanoyl-L-lysyl-[protein] + holo-[ACP] + H(+). Its pathway is protein modification; protein lipoylation via endogenous pathway; protein N(6)-(lipoyl)lysine from octanoyl-[acyl-carrier-protein]: step 1/2. Functionally, catalyzes the transfer of endogenously produced octanoic acid from octanoyl-acyl-carrier-protein onto the lipoyl domains of lipoate-dependent enzymes. Lipoyl-ACP can also act as a substrate although octanoyl-ACP is likely to be the physiological substrate. The chain is Octanoyltransferase from Neisseria gonorrhoeae (strain ATCC 700825 / FA 1090).